The chain runs to 422 residues: Platelet-activating factor acetylhydrolase (422 aa).

The signal sequence occupies residues 1 to 21 (MASLWVRARRVFMKSRASGFS). The active-site Nucleophile is Ser-266. The active-site Charge relay system is Asp-289. N-linked (GlcNAc...) asparagine glycosylation occurs at Asn-331. Residue His-345 is the Charge relay system of the active site.

The protein belongs to the AB hydrolase superfamily. Lipase family. Plasma.

It localises to the secreted. It is found in the extracellular space. It carries out the reaction a 1-O-alkyl-2-acetyl-sn-glycero-3-phosphocholine + H2O = a 1-O-alkyl-sn-glycero-3-phosphocholine + acetate + H(+). Its function is as follows. Modulates the action of platelet-activating factor (PAF) by hydrolyzing the sn-2 ester bond to yield the biologically inactive lyso-PAF. Has a specificity for substrates with a short residue at the sn-2 position. It is inactive against long-chain phospholipids. The protein is Platelet-activating factor acetylhydrolase (PLA2G7) of Gallus gallus (Chicken).